The primary structure comprises 887 residues: METKSSYLKFLNEEQRISVQSPHKYTQILAGPGSGKTRVLTARVAYLLQKNHIAAEDLIIATFTNKAANEIKLRIEAILGNSEASKLISGTFHSIAYKYLVKYGKHIGLSSNWLIADRNDTQAIMKRLLDSLKKAKNPIASGIRGQELTPQNALNRITKLKSNGLLVKPGMDQLSLINGLEEPPKELQSHQSVELYRLYQTSLWKNNLADFDDLLLNFILLLQKQPDCVRNIKHILIDEFQDTSKIQYFLVKLLALQNSDITIVGDPDQSIYGFRSAEIRNLNQMSEDFEGTQVLHLERNYRSAKPILELALSIISQDKSRPKKGLKSNHISSLKPHYRLFETNNKESYWIAREIKRIVGSCPELIFYNDIAILVRSSSLTRSLEHALSELGVPYRMVGVNKFFDREEIRDLIAYLRVLANKDSTSLIRVINVPPRNIGKTKIDRIIFESERRGLTFWQTLNEVKNENILLSQRNDKSFLKSLKSFLCSISKLENRYLSNGHSATLSDLLLGILSEIKYYEYLVRKNKETVEEKWENVMELVQQSDNISCIFYELDYKISTIVLLQNFLTQIALVNEEQKEGESQKVTISTLHAAKGLEWPVVFLPCLCENIIPHSRSDDLDEERRLLYVGATRAQALLYLSSFKSVTGMFADMQNSDNVQDVSPFLKGEEMKRWVMESEIVFNEKIASEIGTILGRKSYGKITNLSGIGSNANHNGTKFENLGFQCCRVLAEAELKKRERVKSVNDYNKDETNFRKHNAKRSKTDIRSWFEKKQPIDSDVEISEPSRSASIMVANKDLNDRSFETVNRIVSTRASTTNASFMSSVRQNLGRGPSTKDQVINRTLREGHQDVVQHTDLNQSNTKVASARPAGSRKRLGVRLRVSRML.

In terms of domain architecture, UvrD-like helicase ATP-binding spans 9-304; that stretch reads KFLNEEQRIS…LHLERNYRSA (296 aa). ATP contacts are provided by residues 33–38 and arginine 302; that span reads GSGKTR. The region spanning 305 to 597 is the UvrD-like helicase C-terminal domain; the sequence is KPILELALSI…TISTLHAAKG (293 aa).

The protein belongs to the helicase family. UvrD subfamily.

Its subcellular location is the nucleus. The enzyme catalyses Couples ATP hydrolysis with the unwinding of duplex DNA by translocating in the 3'-5' direction.. It carries out the reaction ATP + H2O = ADP + phosphate + H(+). Its function is as follows. ATP-dependent DNA helicase involved in DNA repair at least for UV-induced lesions. Also aids the recombinational repair of camptothecin-induced collapsed replication forks. The sequence is that of ATP-dependent DNA helicase srs2 (srs2) from Schizosaccharomyces pombe (strain 972 / ATCC 24843) (Fission yeast).